The following is a 182-amino-acid chain: ADP-ribosylation factor 1 (182 aa).

G2 carries the N-myristoyl glycine lipid modification. Residues 24-31, 67-71, and 126-129 contribute to the GTP site; these read GLDNAGKT, DLGGQ, and NKQD.

This sequence belongs to the small GTPase superfamily. Arf family.

The protein localises to the golgi apparatus. The catalysed reaction is GTP + H2O = GDP + phosphate + H(+). GTP-binding protein involved in protein trafficking; may modulate vesicle budding and uncoating within the Golgi apparatus. This Brassica rapa subsp. pekinensis (Chinese cabbage) protein is ADP-ribosylation factor 1 (ARF1).